A 380-amino-acid polypeptide reads, in one-letter code: Phosphate acyltransferase (380 aa).

Positions 1 to 23 (MPSPPPTPETATASDRTATPAPG) are disordered.

This sequence belongs to the PlsX family. Homodimer. Probably interacts with PlsY.

The protein localises to the cytoplasm. The enzyme catalyses a fatty acyl-[ACP] + phosphate = an acyl phosphate + holo-[ACP]. It participates in lipid metabolism; phospholipid metabolism. Functionally, catalyzes the reversible formation of acyl-phosphate (acyl-PO(4)) from acyl-[acyl-carrier-protein] (acyl-ACP). This enzyme utilizes acyl-ACP as fatty acyl donor, but not acyl-CoA. The protein is Phosphate acyltransferase of Acidiphilium cryptum (strain JF-5).